The following is a 228-amino-acid chain: Glutamate transport system permease protein GluC (228 aa).

The next 4 membrane-spanning stretches (helical) occupy residues 16–36 (FWVT…LGTI), 64–84 (LTLV…LTLA), 100–120 (AVLG…RSGI), and 195–215 (LFVV…PMGL). One can recognise an ABC transmembrane type-1 domain in the interval 16 to 217 (FWVTIQLTVY…ILTLPMGLGL (202 aa)).

It belongs to the binding-protein-dependent transport system permease family. HisMQ subfamily. In terms of assembly, the complex is composed of two ATP-binding proteins (GluA), two transmembrane proteins (GluC and GluD) and a solute-binding protein (GluB).

The protein localises to the cell membrane. Its function is as follows. Part of the ABC transporter complex GluABCD involved in glutamate uptake. Probably responsible for the translocation of the substrate across the membrane. The sequence is that of Glutamate transport system permease protein GluC from Corynebacterium efficiens (strain DSM 44549 / YS-314 / AJ 12310 / JCM 11189 / NBRC 100395).